Here is a 289-residue protein sequence, read N- to C-terminus: Fumagillin beta-trans-bergamotene synthase af520 (289 aa).

6 consecutive transmembrane segments (helical) span residues 35–55 (AVAL…GFLW), 95–115 (TLLY…TNTI), 142–162 (LIGA…FDGG), 165–185 (LHGL…TTGH), 222–242 (AWTI…LAYV), and 262–282 (YVSY…PIFP).

This sequence belongs to the paxB family.

The protein localises to the membrane. It carries out the reaction (2E,6E)-farnesyl diphosphate = (+)-exo-beta-bergamotene + diphosphate. The protein operates within secondary metabolite biosynthesis; terpenoid biosynthesis. Functionally, beta-trans-bergamotene synthase; part of the gene cluster that mediates the biosynthesis of fumagillin, a meroterpenoid that has numerous biological activities including irreversible inhibition of human type 2 methionine aminopeptidase (METAP2). Within the pathway, the membrane-bound fumagillin beta-trans-bergamotene synthase af520 converts farnesyl pyrophosphate (FPP) to beta-trans-bergamotene. The pathway begins with the conversion of FPP to beta-trans-bergamotene by af520. The multifunctional cytochrome P450 monooxygenase af510 then converts beta-trans-bergamotene into 5-keto-demethoxyfumagillol via several oxydation steps. 5-keto-demethoxyfumagillol is then subjected to successive C-6 hydroxylation and O-methylation by the dioxygenase af480 and O-methyltransferase af390-400, respectively, to yield 5-keto-fumagillol, which is then stereoselectively reduced by the keto-reductase af490 to 5R-hydroxy-seco-sesquiterpene. The next step is the polyketide transferase af380-catalyzed transfer of a dodecapentaenoyl group synthesized by the polyketide synthase af370 onto 5R-hydroxy-seco-sesquiterpene which leads to the production of prefumagillin. Finally, oxidative cleavage by the monooxygenase af470 converts prefumagillin to fumagillin. This chain is Fumagillin beta-trans-bergamotene synthase af520, found in Aspergillus fumigatus (strain ATCC MYA-4609 / CBS 101355 / FGSC A1100 / Af293) (Neosartorya fumigata).